The sequence spans 420 residues: Subtilisin-like protease 7 (420 aa).

The signal sequence occupies residues 1 to 20 (MGFITKAIPLALAAASVING). Residues 21-119 (AEIMETRAGV…IERDARVQIN (99 aa)) constitute a propeptide that is removed on maturation. One can recognise an Inhibitor I9 domain in the interval 36 to 118 (KYIVVMNDGM…YIERDARVQI (83 aa)). The Peptidase S8 domain maps to 129 to 413 (SWGLARVGSK…SFPLNIYEEQ (285 aa)). Active-site charge relay system residues include Asp-161 and His-192. Asn-222 and Asn-252 each carry an N-linked (GlcNAc...) asparagine glycan. Ser-346 serves as the catalytic Charge relay system. Asn-396 is a glycosylation site (N-linked (GlcNAc...) asparagine).

It belongs to the peptidase S8 family.

Its subcellular location is the secreted. In terms of biological role, secreted subtilisin-like serine protease with keratinolytic activity that contributes to pathogenicity. The protein is Subtilisin-like protease 7 (SUB7) of Arthroderma benhamiae (strain ATCC MYA-4681 / CBS 112371) (Trichophyton mentagrophytes).